Reading from the N-terminus, the 92-residue chain is Small ribosomal subunit protein uS19 (92 aa).

The protein belongs to the universal ribosomal protein uS19 family.

Functionally, protein S19 forms a complex with S13 that binds strongly to the 16S ribosomal RNA. This Acidovorax sp. (strain JS42) protein is Small ribosomal subunit protein uS19.